The primary structure comprises 306 residues: Ribosomal protein L11 methyltransferase (306 aa).

Residues Thr-152, Gly-179, Asp-201, and Asn-243 each coordinate S-adenosyl-L-methionine.

This sequence belongs to the methyltransferase superfamily. PrmA family.

The protein resides in the cytoplasm. It catalyses the reaction L-lysyl-[protein] + 3 S-adenosyl-L-methionine = N(6),N(6),N(6)-trimethyl-L-lysyl-[protein] + 3 S-adenosyl-L-homocysteine + 3 H(+). Functionally, methylates ribosomal protein L11. The polypeptide is Ribosomal protein L11 methyltransferase (Geobacter sp. (strain M21)).